A 454-amino-acid polypeptide reads, in one-letter code: Elongation factor Tu, mitochondrial (454 aa).

The transit peptide at 1-51 (MASVVLRNPSSKRLVPFSSQIYSRCGASVTSSYSISHSIGGDDLSSSTFGT) directs the protein to the mitochondrion. The tr-type G domain occupies 65-261 (KPHVNVGTIG…AVDEYIPDPV (197 aa)). The G1 stretch occupies residues 74–81 (GHVDHGKT). GTP is bound at residue 74-81 (GHVDHGKT). Thr82 bears the Phosphothreonine mark. The G2 stretch occupies residues 115–119 (GITIA). The tract at residues 136-139 (DCPG) is G3. GTP contacts are provided by residues 136 to 140 (DCPGH) and 191 to 194 (NKVD). The G4 stretch occupies residues 191–194 (NKVD). Positions 229–231 (SAL) are G5.

It belongs to the TRAFAC class translation factor GTPase superfamily. Classic translation factor GTPase family. EF-Tu/EF-1A subfamily.

The protein resides in the mitochondrion. This protein promotes the GTP-dependent binding of aminoacyl-tRNA to the A-site of ribosomes during protein biosynthesis. In Arabidopsis thaliana (Mouse-ear cress), this protein is Elongation factor Tu, mitochondrial (TUFA).